We begin with the raw amino-acid sequence, 251 residues long: Flap endonuclease Xni (251 aa).

Asp104 is a binding site for Mg(2+). The 91-residue stretch at 160 to 250 (VLPRQLPDYW…SGNLQQLRLK (91 aa)) folds into the 5'-3' exonuclease domain. 5 residues coordinate K(+): Leu171, Ala172, Pro180, Val182, and Val185. An interaction with DNA region spans residues 184-189 (GVGAKT).

It belongs to the Xni family. The cofactor is Mg(2+). K(+) serves as cofactor.

Its function is as follows. Has flap endonuclease activity. During DNA replication, flap endonucleases cleave the 5'-overhanging flap structure that is generated by displacement synthesis when DNA polymerase encounters the 5'-end of a downstream Okazaki fragment. The sequence is that of Flap endonuclease Xni from Yersinia pseudotuberculosis serotype I (strain IP32953).